A 136-amino-acid polypeptide reads, in one-letter code: Piercer of microtubule wall 1 protein (136 aa).

The span at M1 to K16 shows a compositional bias: basic and acidic residues. The interval M1–W27 is disordered.

Belongs to the PIERCE1 family. Microtubule inner protein component of sperm flagellar doublet microtubules. Interacts with CFAP53, ODAD1 and ODAD3; the interactions link the outer dynein arms docking complex (ODA-DC) to the internal microtubule inner proteins (MIP) in cilium axoneme. Expressed in trachea multiciliated cells.

The protein localises to the cytoplasm. The protein resides in the cytoskeleton. It is found in the cilium axoneme. It localises to the flagellum axoneme. Functionally, microtubule inner protein involved in the attachment of outer dynein arms (ODAs) to dynein-decorated doublet microtubules (DMTs) in cilia axoneme, which is required for motile cilia beating. Functions at the initial step of left-right asymmetry specification of the visceral organs. This is Piercer of microtubule wall 1 protein (PIERCE1) from Bos taurus (Bovine).